We begin with the raw amino-acid sequence, 263 residues long: Transmembrane protein 176B (263 aa).

The next 4 membrane-spanning stretches (helical) occupy residues 61–81 (LGVTQILLGLVSCVLGVCLYF), 89–109 (ASGCAFWSGSVAILAGVGIVI), 125–145 (LLLACSATAAAATVMGVKSLI), and 197–217 (LFLAFCILFTVICILKIVVSV). The segment at 242 to 263 (KKLLGGDSAPASPTKEKIPVTP) is disordered. Residues Ser-249 and Ser-253 each carry the phosphoserine modification.

This sequence belongs to the TMEM176 family. In terms of tissue distribution, expressed in spleen by a variety of myeloid cells including macrophages and dendritic cells (at protein level). Ubiquitously expressed with higher expression in lymphoid tissues.

The protein resides in the nucleus membrane. Its function is as follows. Required for the development of cerebellar granule cells. May play a role in the process of maturation of dendritic cells. In Rattus norvegicus (Rat), this protein is Transmembrane protein 176B (Tmem176b).